Consider the following 184-residue polypeptide: MILPIYVYGQPVLRKVAEDITPEYPNLKELIANMFETMVHADGVGLAAPQIGLPIRVVTITLDPLSEDYPEFKDFNKAYINPHIIEVGGEEVSMEEGCLSLPGIHESVKRGNKIRVKYMDENFVEHDEVVEGYLARVMQHEFDHLDGKMFIDHLSPLRKQMIRGKLNTMLKGKARSSYKMKQVK.

Fe cation-binding residues include cysteine 98 and histidine 140. Residue glutamate 141 is part of the active site. Residue histidine 144 participates in Fe cation binding.

It belongs to the polypeptide deformylase family. The cofactor is Fe(2+).

The enzyme catalyses N-terminal N-formyl-L-methionyl-[peptide] + H2O = N-terminal L-methionyl-[peptide] + formate. In terms of biological role, removes the formyl group from the N-terminal Met of newly synthesized proteins. Requires at least a dipeptide for an efficient rate of reaction. N-terminal L-methionine is a prerequisite for activity but the enzyme has broad specificity at other positions. The protein is Peptide deformylase of Bacteroides thetaiotaomicron (strain ATCC 29148 / DSM 2079 / JCM 5827 / CCUG 10774 / NCTC 10582 / VPI-5482 / E50).